The following is a 320-amino-acid chain: o-succinylbenzoate synthase (320 aa).

The active-site Proton donor is lysine 133. 3 residues coordinate Mg(2+): aspartate 161, glutamate 190, and aspartate 213. Lysine 235 (proton acceptor) is an active-site residue.

Belongs to the mandelate racemase/muconate lactonizing enzyme family. MenC type 1 subfamily. A divalent metal cation serves as cofactor.

The catalysed reaction is (1R,6R)-6-hydroxy-2-succinyl-cyclohexa-2,4-diene-1-carboxylate = 2-succinylbenzoate + H2O. Its pathway is quinol/quinone metabolism; 1,4-dihydroxy-2-naphthoate biosynthesis; 1,4-dihydroxy-2-naphthoate from chorismate: step 4/7. The protein operates within quinol/quinone metabolism; menaquinone biosynthesis. Functionally, converts 2-succinyl-6-hydroxy-2,4-cyclohexadiene-1-carboxylate (SHCHC) to 2-succinylbenzoate (OSB). In Escherichia coli O157:H7, this protein is o-succinylbenzoate synthase.